We begin with the raw amino-acid sequence, 251 residues long: Triosephosphate isomerase (251 aa).

Residue 9 to 11 (NWK) participates in substrate binding. H95 (electrophile) is an active-site residue. The active-site Proton acceptor is the E167. Substrate-binding positions include G173, S213, and 234-235 (GG).

The protein belongs to the triosephosphate isomerase family. In terms of assembly, homodimer.

The protein localises to the cytoplasm. The catalysed reaction is D-glyceraldehyde 3-phosphate = dihydroxyacetone phosphate. It participates in carbohydrate biosynthesis; gluconeogenesis. Its pathway is carbohydrate degradation; glycolysis; D-glyceraldehyde 3-phosphate from glycerone phosphate: step 1/1. In terms of biological role, involved in the gluconeogenesis. Catalyzes stereospecifically the conversion of dihydroxyacetone phosphate (DHAP) to D-glyceraldehyde-3-phosphate (G3P). The sequence is that of Triosephosphate isomerase from Fusobacterium nucleatum subsp. nucleatum (strain ATCC 25586 / DSM 15643 / BCRC 10681 / CIP 101130 / JCM 8532 / KCTC 2640 / LMG 13131 / VPI 4355).